Here is a 77-residue protein sequence, read N- to C-terminus: MKREILKHQLVPEHVILNESEAKRVLKELDAHPEQLPKIKTTDPVAKAIGAKRGDIVKIIRKSPTAEEFVTYRLVQD.

Belongs to the archaeal Rpo5/eukaryotic RPB5 RNA polymerase subunit family. Part of the RNA polymerase complex.

It is found in the cytoplasm. It catalyses the reaction RNA(n) + a ribonucleoside 5'-triphosphate = RNA(n+1) + diphosphate. DNA-dependent RNA polymerase (RNAP) catalyzes the transcription of DNA into RNA using the four ribonucleoside triphosphates as substrates. The polypeptide is DNA-directed RNA polymerase subunit Rpo5 (Methanothermobacter thermautotrophicus (strain ATCC 29096 / DSM 1053 / JCM 10044 / NBRC 100330 / Delta H) (Methanobacterium thermoautotrophicum)).